A 368-amino-acid chain; its full sequence is MSRSSLVDPSFELSDPCPDIHALFIQFDARFFGGSLACCEVKWSPRMYACAGICSYEIRGGRGGLCSIRLSKPLLTLRPRSDLVETLLHEMIHAYLFVKERNRDRDGHGPQFQAHMHRINQAGGTNITIYHSFHDEVRLYKQHWWRCSGPCRDRRPFFGYVKRSCNRAPGPNDRWWSQHQQSCGGNFLKVKEPEGYGQGKGSKRTNDKNKSGGPALKKTITPPRVTLDDFFKKDGKNSSDNSTSKSPTKPSTSLFTGSGQKLGGSSSTSSLLNSYPKATQNSGGNRLGGTSGGVSRLLPPVNFTSPSSAPVAEQVIDLGDSDDDDFQDMDDDALEISFVASDNSVICPSCNTEVMENLIHGHLDYCLG.

One can recognise a SprT-like domain in the interval 21–190 (HALFIQFDAR…QSCGGNFLKV (170 aa)). His89 is a Zn(2+) binding site. The active site involves Glu90. 2 residues coordinate Zn(2+): His93 and His108. The segment at 187–309 (FLKVKEPEGY…PVNFTSPSSA (123 aa)) is disordered. Positions 226–237 (TLDDFFKKDGKN) are enriched in basic and acidic residues. The span at 238–274 (SSDNSTSKSPTKPSTSLFTGSGQKLGGSSSTSSLLNS) shows a compositional bias: low complexity. The UBZ4-type zinc finger occupies 344–368 (SVICPSCNTEVMENLIHGHLDYCLG). Zn(2+) contacts are provided by Cys347, Cys350, His362, and Cys366.

This sequence belongs to the Spartan family. As to quaternary structure, interacts with vcp/p97 (cdc-48.1 or cdc-48.2).

The protein localises to the nucleus. Its subcellular location is the chromosome. DNA-dependent metalloendopeptidase that mediates the proteolytic cleavage of covalent DNA-protein cross-links (DPCs) during DNA synthesis, thereby playing a key role in maintaining genomic integrity. DPCs are highly toxic DNA lesions that interfere with essential chromatin transactions, such as replication and transcription, and which are induced by reactive agents, such as UV light or formaldehyde. Associates with the DNA replication machinery and specifically removes DPCs during DNA synthesis. Regulator of UV-induced DNA damage response: required to protect genome stability during DNA replication, possibly via recruitment of vcp/p97 (cdc-48.1 or cdc-48.2) recruitment. The sequence is that of DNA-dependent metalloprotease dvc-1 from Caenorhabditis elegans.